The primary structure comprises 246 residues: Mast cell protease 4 (246 aa).

Residues 1 to 18 (MQALLFLMALLLPSGAGA) form the signal peptide. The propeptide at 19 to 20 (EE) is activation peptide. The Peptidase S1 domain occupies 21–244 (IIGGVESRPH…YVPWINRVIK (224 aa)). The cysteines at positions 50 and 66 are disulfide-linked. Residues His65 and Asp109 each act as charge relay system in the active site. Cystine bridges form between Cys143-Cys208 and Cys174-Cys187. Ser202 (charge relay system) is an active-site residue.

This sequence belongs to the peptidase S1 family. Granzyme subfamily. Monomer. Interacts with iripin-2, a serine protease inhibitor from Ixodes ricinus saliva. As to expression, submucosal mast cells. In femoral muscle, detected in myocytes but not in mast cells.

Its activity is regulated as follows. Completely inhibited by serine protease inhibitors such as chymostatin, diisopropylfluorophosphate and phenylmethylsulfonyl fluoride, but not by p-tosyl-L-phenylalanine chloromethyl ketone, p-tosyl-L-lysine chloromethyl ketone, pepstatin, E-64, EDTA or o-phenanthroline. Also inhibited by lima bean trypsin inhibitor, soy bean trypsin inhibitor and human plasma alpha1-antichymotrypsin. Has chymotrypsin-like activity. Hydrolyzes the amide bonds of synthetic substrates having Tyr and Phe residues at the P1 position. Preferentially hydrolyzes the 'Tyr-4-|-Ile-5' bond of angiotensin I and the 'Phe-20-|-Ala-21' bond of amyloid beta-protein, and is less active towards the 'Phe-8-|-His-9' bond of angiotensin I and the 'Phe-4-|-Ala-5' and 'Tyr-10-|-Glu-11' bonds of amyloid beta-protein. Involved in thrombin regulation and fibronectin processing. The protein is Mast cell protease 4 (Mcpt4) of Mus musculus (Mouse).